We begin with the raw amino-acid sequence, 314 residues long: Olfactory receptor 51G2 (314 aa).

The Extracellular segment spans residues 1 to 30 (MTLGSLGNSSSSVSATFLLSGIPGLERMHI). A glycan (N-linked (GlcNAc...) asparagine) is linked at asparagine 8. The chain crosses the membrane as a helical span at residues 31–51 (WISIPLCFMYLVSIPGNCTIL). Over 52 to 59 (FIIKTERS) the chain is Cytoplasmic. A helical transmembrane segment spans residues 60–80 (LHEPMYLFLSMLALIDLGLSL). Residues 81–104 (CTLPTVLGIFWVGAREISHDACFA) are Extracellular-facing. Cysteine 102 and cysteine 194 are disulfide-bonded. Residues 105 to 125 (QLFFIHCFSFLESSVLLSMAF) form a helical membrane-spanning segment. At 126–144 (DRFVAICHPLHYVSILTNT) the chain is on the cytoplasmic side. A helical membrane pass occupies residues 145 to 165 (VIGRIGLVSLGRSVALIFPLP). At 166–201 (FMLKRFPYCGSPVLSHSYCLHQEVMKLACADMKANS) the chain is on the extracellular side. A helical membrane pass occupies residues 202 to 222 (IYGMFVIVSTVGIDSLLILFS). The Cytoplasmic portion of the chain corresponds to 223–242 (YALILRTVLSIASRAERFKA). The helical transmembrane segment at 243–263 (LNTCVSHICAVLLFYTPMIGL) threads the bilayer. Residues 264-278 (SVIHRFGKQAPHLVQ) are Extracellular-facing. The helical transmembrane segment at 279-299 (VVMGFMYLLFPPVMNPIVYSV) threads the bilayer. Over 300 to 314 (KTKQIRDRVTHAFCY) the chain is Cytoplasmic.

This sequence belongs to the G-protein coupled receptor 1 family.

The protein localises to the cell membrane. Its function is as follows. Odorant receptor. In Homo sapiens (Human), this protein is Olfactory receptor 51G2 (OR51G2).